Consider the following 129-residue polypeptide: 3-oxo-4,17-pregnadiene-20-carboxyl-CoA hydratase beta subunit (129 aa).

It belongs to the thioester dehydratase family. Heterodimer composed of ChsH1 and ChsH2. Two heterodimers combine to form a heterotetramer. The complex interacts with Ltp2 via the DUF35 C-terminal region of ChsH2. The ChsH1-ChsH2-Ltp2 protein complex is composed of two protomers that form a heterohexameric structure through the Ltp2 dimerization interface.

It carries out the reaction 3-oxochola-4,17-dien-22-oyl-CoA + H2O = 17-hydroxy-3-oxochol-4-en-22-oyl-CoA. The enzyme catalyses (2E)-octenoyl-CoA + H2O = 3-hydroxyoctanoyl-CoA. The catalysed reaction is (2E)-decenoyl-CoA + H2O = 3-hydroxydecanoyl-CoA. It functions in the pathway steroid metabolism; cholesterol degradation. With respect to regulation, in the absence of the Ltp2 aldolase, ChsH1/ChsH2 can hydrate only about 30% of the 3-OPDC-CoA substrate. Complete turnover requires the presence of Ltp2. Functionally, involved in cholesterol side chain degradation. Catalyzes the hydration of 3-oxo-4,17-pregnadiene-20-carboxyl-CoA (3-OPDC-CoA) to form 17-hydroxy-3-oxo-4-pregnene-20-carboxyl-CoA (17-HOPC-CoA), in the modified beta-oxidation pathway for cholesterol side chain degradation. Can also use octenoyl-CoA and decenoyl-CoA, with lower efficiency. The chain is 3-oxo-4,17-pregnadiene-20-carboxyl-CoA hydratase beta subunit from Mycobacterium tuberculosis (strain ATCC 25618 / H37Rv).